Reading from the N-terminus, the 24-residue chain is Xenoposin precursor fragment B2 (24 aa).

In terms of tissue distribution, expressed by the skin glands.

The protein resides in the secreted. Its function is as follows. Has antimicrobial activity against Gram-negative bacterium E.coli ATCC 25922 (MIC=100 uM), Gram-positive bacterium S.auerus ATCC 25923 (MIC=25 uM). In Xenopus borealis (Kenyan clawed frog), this protein is Xenoposin precursor fragment B2.